Consider the following 181-residue polypeptide: Probable pyruvoyl-dependent arginine decarboxylase (181 aa).

Ser-43 carries the post-translational modification Pyruvic acid (Ser).

Belongs to the PdaD family. Requires pyruvate as cofactor.

It catalyses the reaction L-arginine + H(+) = agmatine + CO2. In Chlorobium phaeobacteroides (strain BS1), this protein is Probable pyruvoyl-dependent arginine decarboxylase.